The chain runs to 464 residues: Chromosomal replication initiator protein DnaA (464 aa).

The segment at 1-74 (MDAVGYEVFW…ERKFLELSGH (74 aa)) is domain I, interacts with DnaA modulators. The segment at 74 to 117 (HPIKLLFAVKKGTPHGNTAPPKHVHTYLEKNSPAEVPSKKSFHP) is domain II. A domain III, AAA+ region region spans residues 118 to 341 (DLNRDYTFEN…GALTKIIAFI (224 aa)). The ATP site is built by G162, G164, K165, and T166. Positions 342–464 (EVSGSITIDI…LKSKVQDSIR (123 aa)) are domain IV, binds dsDNA.

Belongs to the DnaA family. Oligomerizes as a right-handed, spiral filament on DNA at oriC.

Its subcellular location is the cytoplasm. In terms of biological role, plays an essential role in the initiation and regulation of chromosomal replication. ATP-DnaA binds to the origin of replication (oriC) to initiate formation of the DNA replication initiation complex once per cell cycle. Binds the DnaA box (a 9 base pair repeat at the origin) and separates the double-stranded (ds)DNA. Forms a right-handed helical filament on oriC DNA; dsDNA binds to the exterior of the filament while single-stranded (ss)DNA is stabiized in the filament's interior. The ATP-DnaA-oriC complex binds and stabilizes one strand of the AT-rich DNA unwinding element (DUE), permitting loading of DNA polymerase. After initiation quickly degrades to an ADP-DnaA complex that is not apt for DNA replication. Binds acidic phospholipids. The chain is Chromosomal replication initiator protein DnaA from Treponema pallidum (strain Nichols).